The primary structure comprises 877 residues: Kinetochore null protein 2 (877 aa).

Residues 20–107 (IRLNLWSMKF…SNGIPENWAD (88 aa)) form the SANTA domain. 3 disordered regions span residues 122-315 (RPIQ…SKSV), 338-535 (FEST…ESLN), and 549-604 (MMFG…NDSI). A coiled-coil region spans residues 153 to 211 (QKNSENEKERNRREREEQQTKERERRLEEEKQRRDAEAEAERRRKEEEELEEANYTLRA). The segment covering 156 to 199 (SENEKERNRREREEQQTKERERRLEEEKQRRDAEAEAERRRKEE) has biased composition (basic and acidic residues). Positions 251–279 (IASSTPQQKQRLADGANNQIPPTQKSQDS) are enriched in polar residues. Composition is skewed to basic and acidic residues over residues 359 to 385 (EPRH…DNSR), 394 to 444 (RRHE…RGRD), and 453 to 480 (VRFE…DYGR). Residues 491 to 549 (EDEEKLNAIVRREKELRNRLQKSQKASSSSYRHRSNSSDAEESLNEWDIENQELLDNSM) adopt a coiled-coil conformation. Residues 511–520 (QKSQKASSSS) show a composition bias toward low complexity. Residues 573–583 (RSKPANSTKSP) show a composition bias toward polar residues. A compositionally biased stretch (basic and acidic residues) spans 592–601 (ASLEDNRDLN). One can recognise a Myb-like domain in the interval 617 to 678 (VAKKITWRKQ…AITRLKWVEP (62 aa)). Disordered regions lie at residues 757 to 785 (RGGT…FNSP) and 808 to 877 (MQAR…TSIY). Polar residues-rich tracts occupy residues 775–785 (SRGNNSTFNSP) and 819–836 (SSSM…TSIS). Acidic residues predominate over residues 856 to 871 (EDDENEDNDDDDDMRE).

The protein belongs to the KNL2 family. As to quaternary structure, interacts with hcp-3.

It localises to the nucleus. Its subcellular location is the chromosome. The protein resides in the centromere. The protein localises to the kinetochore. Functionally, required for the recruitment of hcp-3, hcp-4, knl-1, bub-1 and lin-53 to kinetochores, kinetochore assembly, chromosome condensation and chromosome segregation in meiosis and mitosis. This Caenorhabditis elegans protein is Kinetochore null protein 2.